Consider the following 348-residue polypeptide: GMP reductase 2 (348 aa).

Residues 26–27, Lys-78, 129–131, and 180–181 each bind NADP(+); these read SR, DVA, and IG. Residues Gly-181, Gly-183, and Cys-186 each coordinate K(+). Cys-186 acts as the Thioimidate intermediate in catalysis. Residue Thr-188 is the Proton donor/acceptor of the active site. Arg-189 provides a ligand contact to K(+). GMP contacts are provided by residues 219-221, 242-243, 268-270, and 286-290; these read DGG, GG, GMS, and RASEG. NADP(+) is bound by residues Met-269 and 285–286; that span reads YR. Lys-291 is modified (N6-acetyllysine). 314-317 is an NADP(+) binding site; it reads STCT.

Belongs to the IMPDH/GMPR family. GuaC type 1 subfamily. Homotetramer.

The enzyme catalyses IMP + NH4(+) + NADP(+) = GMP + NADPH + 2 H(+). Its function is as follows. Catalyzes the irreversible NADPH-dependent deamination of GMP to IMP. It functions in the conversion of nucleobase, nucleoside and nucleotide derivatives of G to A nucleotides, and in maintaining the intracellular balance of A and G nucleotides. Plays a role in modulating cellular differentiation. The sequence is that of GMP reductase 2 from Bos taurus (Bovine).